Consider the following 1088-residue polypeptide: DNA mismatch repair protein MutS (1088 aa).

The tract at residues 498 to 579 is disordered; sequence PLDGITPPDD…SFEMPSLHGH (82 aa). Acidic residues predominate over residues 537–546; it reads DLFDEEEEQE. 816 to 823 contributes to the ATP binding site; that stretch reads GPNMSGKS. The disordered stretch occupies residues 1000–1048; sequence LERRAPRSTPQPAPERTEERPAAGRPTARSHSAARGDPPRAPDGQLSLF.

The protein belongs to the DNA mismatch repair MutS family.

This protein is involved in the repair of mismatches in DNA. It is possible that it carries out the mismatch recognition step. This protein has a weak ATPase activity. This Roseiflexus castenholzii (strain DSM 13941 / HLO8) protein is DNA mismatch repair protein MutS.